The sequence spans 442 residues: MNFTTKRINSANAVINGSIALSKIEEKFEKVIKKIAKNIKIDGFRKGKVPTQVIKTRYKEQIDQDAQQEAIQELLTAALKELEIQPNSLIGNPMISQFNKLNDKIELEIKLGITPTLNLDNVEDYTPEVKLKTISKNLIDERLEEIAKNRAPLNEITQERTLQKDDTAQIDFEGFVDGKAFEGGKGENFNLAIGSNQFIPGFEDALIGMKNGEKRTIKVTFPEQYQAKHLAGKEASFDVTLHKILQKELPKIDDEFAKSIAGEESNLQSLKDMIKEQLEMEQKTEIYNKELKEKLVEILLKNISFDLPDLIVEQEMDILFRNALSQLKPEEFDKIKNNQDEAKKQRETHKDEARKSVQITFIMDALAKKYNIAINDNEVLQTIYYEAMMMGQDPKATLEHYQKNNLVPAIKMTMLEDRVLHYLLDKKFEESKANTNAQKDNQ.

Residues 165-250 (DDTAQIDFEG…LHKILQKELP (86 aa)) form the PPIase FKBP-type domain.

The protein belongs to the FKBP-type PPIase family. Tig subfamily.

The protein localises to the cytoplasm. The catalysed reaction is [protein]-peptidylproline (omega=180) = [protein]-peptidylproline (omega=0). Its function is as follows. Involved in protein export. Acts as a chaperone by maintaining the newly synthesized protein in an open conformation. Functions as a peptidyl-prolyl cis-trans isomerase. The sequence is that of Trigger factor from Helicobacter hepaticus (strain ATCC 51449 / 3B1).